Reading from the N-terminus, the 280-residue chain is uncharacterized protein (280 aa).

Composition is skewed to basic and acidic residues over residues 110-122, 167-177, 223-261, and 269-280; these read EKQAHDDHPERLQ, ATGEERAECGR, ARQHDQRGDRRKGEGDRQKHGDRRGRPDARKNADQRPQQ, and DVDRSKSCLEAE. Disordered stretches follow at residues 110–137, 151–177, and 219–280; these read EKQAHDDHPERLQNRSVRQRNGDKKTEH, HRGERRSGNCQQQGRHATGEERAECGR, and TIID…LEAE.

This is an uncharacterized protein from Agrobacterium vitis (Rhizobium vitis).